Consider the following 122-residue polypeptide: Small ribosomal subunit protein uS13 (122 aa).

Residues 97 to 122 (PVRGQRTHTNARTRKGPAKAIAGKKK) form a disordered region.

This sequence belongs to the universal ribosomal protein uS13 family. Part of the 30S ribosomal subunit. Forms a loose heterodimer with protein S19. Forms two bridges to the 50S subunit in the 70S ribosome.

Its function is as follows. Located at the top of the head of the 30S subunit, it contacts several helices of the 16S rRNA. In the 70S ribosome it contacts the 23S rRNA (bridge B1a) and protein L5 of the 50S subunit (bridge B1b), connecting the 2 subunits; these bridges are implicated in subunit movement. Contacts the tRNAs in the A and P-sites. This chain is Small ribosomal subunit protein uS13, found in Bartonella tribocorum (strain CIP 105476 / IBS 506).